A 135-amino-acid chain; its full sequence is ATP synthase epsilon chain, chloroplastic (135 aa).

This sequence belongs to the ATPase epsilon chain family. As to quaternary structure, F-type ATPases have 2 components, CF(1) - the catalytic core - and CF(0) - the membrane proton channel. CF(1) has five subunits: alpha(3), beta(3), gamma(1), delta(1), epsilon(1). CF(0) has three main subunits: a, b and c.

It localises to the plastid. The protein localises to the chloroplast thylakoid membrane. Functionally, produces ATP from ADP in the presence of a proton gradient across the membrane. The sequence is that of ATP synthase epsilon chain, chloroplastic from Euglena gracilis.